The sequence spans 491 residues: MNTQQLAKLRSIVPEMRRVRHIHFVGIGGAGMGGIAEVLANEGYQISGSDLAPNPVTQQLTSLGATIFFNHRPENVRDASVVVVSSAISADNPEIVAAHEARIPVIRRAEMLAELMRFRHGIAIAGTHGKTTTTAMVSSIYAEAGLDPTFVNGGLVKAAGVHARLGHSRYLIAEADESDASFLHLQPMVAIVTNIEADHMDTYHGDFENLKQTFINFLHNLPFYGRAVMCVDDPVIRELLPRVGRQTTTYGFSEDADVRVEDYQQIGPQGHFTLLRQGMPDLHVTLNAPGRHNALNAAAAVAVATEEGIADDAILRALESFQGTGRRFDFLGEFPLEPVNGKAGTAMLVDDYGHHPTEVDATIKAARAGWPDKNLVMLFQPHRYTRTRDLYDDFANVLTQVDALLMLDVYPAGEAPIPGADSRSLCRTIRNRGKIDPILVSDPAQVATMLAPVLTGNDLILVQGAGNVGKIARYLSEIKLKPQIQEEEQHG.

126 to 132 contributes to the ATP binding site; the sequence is GTHGKTT.

It belongs to the MurCDEF family.

It localises to the cytoplasm. It carries out the reaction UDP-N-acetyl-alpha-D-muramate + L-alanine + ATP = UDP-N-acetyl-alpha-D-muramoyl-L-alanine + ADP + phosphate + H(+). It functions in the pathway cell wall biogenesis; peptidoglycan biosynthesis. Its function is as follows. Cell wall formation. This chain is UDP-N-acetylmuramate--L-alanine ligase, found in Salmonella typhimurium (strain LT2 / SGSC1412 / ATCC 700720).